The sequence spans 500 residues: Transcription termination factor MTERF8, chloroplastic (500 aa).

The N-terminal 64 residues, 1–64, are a transit peptide targeting the chloroplast; it reads MVILSLVSCS…NHREPALTFR (64 aa).

This sequence belongs to the mTERF family.

The protein resides in the plastid. It is found in the chloroplast. Functionally, transcription termination factor that is transcriptionally active in chloroplasts. This chain is Transcription termination factor MTERF8, chloroplastic, found in Arabidopsis thaliana (Mouse-ear cress).